Here is a 688-residue protein sequence, read N- to C-terminus: Zinc finger protein 770 (688 aa).

Lys11 participates in a covalent cross-link: Glycyl lysine isopeptide (Lys-Gly) (interchain with G-Cter in SUMO2). 3 C2H2-type zinc fingers span residues 27 to 49, 55 to 77, and 81 to 103; these read YVCN…YLIH, FECD…QLTH, and FKCS…QQLH. Residues Lys112, Lys121, and Lys146 each participate in a glycyl lysine isopeptide (Lys-Gly) (interchain with G-Cter in SUMO2) cross-link. C2H2-type zinc fingers lie at residues 160 to 182, 188 to 210, and 216 to 238; these read HACT…VLIH, FKCV…QLTH, and FQCC…KQIH. Lys262 is covalently cross-linked (Glycyl lysine isopeptide (Lys-Gly) (interchain with G-Cter in SUMO2)). The C2H2-type 7; degenerate zinc finger occupies 294–318; that stretch reads FQCPKCEKCFESEQILNEHSCFPAR. Glycyl lysine isopeptide (Lys-Gly) (interchain with G-Cter in SUMO2) cross-links involve residues Lys420 and Lys437. 4 C2H2-type zinc fingers span residues 475 to 497, 503 to 525, 623 to 645, and 651 to 673; these read CPCD…YLIH, FGCN…EQTH, YRCS…YLIH, and FECS…QLTH. A Glycyl lysine isopeptide (Lys-Gly) (interchain with G-Cter in SUMO2) cross-link involves residue Lys681.

This sequence belongs to the krueppel C2H2-type zinc-finger protein family.

The protein localises to the nucleus. Functionally, may be involved in transcriptional regulation. This is Zinc finger protein 770 (ZNF770) from Pongo abelii (Sumatran orangutan).